Reading from the N-terminus, the 295-residue chain is MTDISPLDQARILSEALPHMQQYDEETIVIKYGGHAMGDEETAKNFARDIVLLEQTAINPVVVHGGGPQIATMLKRLGIQSEFAAGLRITDAATIEIVEMVLAGSVNKQIVGYINEAGGKAVGLSGKDANMVKASKTTRTIVDPGSNIEKAIDLGFVGDPEKVDLTLLNQLIGYELIPVLAPLATSKEGQTLNVNADTFAGAVAGALKAKRLLLLTDVPGVLDKSKKLIPQLSVKDARKLIADGTISGGMIPKVETCIYALEQGVEGVVIIDGKMQHAVLLELFTNQGTGTLIHK.

Residues 66–67, R88, and N193 each bind substrate; that span reads GG.

The protein belongs to the acetylglutamate kinase family. ArgB subfamily.

The protein resides in the cytoplasm. It catalyses the reaction N-acetyl-L-glutamate + ATP = N-acetyl-L-glutamyl 5-phosphate + ADP. It participates in amino-acid biosynthesis; L-arginine biosynthesis; N(2)-acetyl-L-ornithine from L-glutamate: step 2/4. Its function is as follows. Catalyzes the ATP-dependent phosphorylation of N-acetyl-L-glutamate. The sequence is that of Acetylglutamate kinase from Bradyrhizobium diazoefficiens (strain JCM 10833 / BCRC 13528 / IAM 13628 / NBRC 14792 / USDA 110).